Reading from the N-terminus, the 251-residue chain is Lactose phosphotransferase system repressor (251 aa).

Positions Lys-3–Ser-58 constitute an HTH deoR-type domain. Positions Ile-20 to Asp-39 form a DNA-binding region, H-T-H motif.

In terms of biological role, repressor of the lactose catabolism operon. Galactose-6-phosphate is the inducer. The polypeptide is Lactose phosphotransferase system repressor (lacR) (Streptococcus mutans serotype c (strain ATCC 700610 / UA159)).